Reading from the N-terminus, the 599-residue chain is Elongation factor 4 (599 aa).

Residues 2–184 (KNIRNFSIIA…RLVRDIPPPE (183 aa)) form the tr-type G domain. Residues 14–19 (DHGKST) and 131–134 (NKID) contribute to the GTP site.

The protein belongs to the TRAFAC class translation factor GTPase superfamily. Classic translation factor GTPase family. LepA subfamily.

It is found in the cell inner membrane. The catalysed reaction is GTP + H2O = GDP + phosphate + H(+). Required for accurate and efficient protein synthesis under certain stress conditions. May act as a fidelity factor of the translation reaction, by catalyzing a one-codon backward translocation of tRNAs on improperly translocated ribosomes. Back-translocation proceeds from a post-translocation (POST) complex to a pre-translocation (PRE) complex, thus giving elongation factor G a second chance to translocate the tRNAs correctly. Binds to ribosomes in a GTP-dependent manner. In Escherichia fergusonii (strain ATCC 35469 / DSM 13698 / CCUG 18766 / IAM 14443 / JCM 21226 / LMG 7866 / NBRC 102419 / NCTC 12128 / CDC 0568-73), this protein is Elongation factor 4.